A 726-amino-acid chain; its full sequence is Cyclic nucleotide-gated ion channel 2 (726 aa).

The Cytoplasmic portion of the chain corresponds to 1 to 127; sequence MPSHPNFIFR…SKRVQRWNRA (127 aa). Residues 26–46 form a disordered region; it reads IDENSNLQINGGDSSSSGSDE. The span at 36–45 shows a compositional bias: low complexity; that stretch reads GGDSSSSGSD. A helical transmembrane segment spans residues 128–148; the sequence is LLLARGMALAVDPLFFYALSI. Residues 149–162 lie on the Extracellular side of the membrane; the sequence is GRTTGPACLYMDGA. The helical transmembrane segment at 163–183 threads the bilayer; sequence FAAVVTVLRTCLDAVHLWHVW. Residues 184–219 are Cytoplasmic-facing; that stretch reads LQFRLAYVSRESLVVGCGKLVWDPRAIASHYARSLT. A helical membrane pass occupies residues 220–240; sequence GFWFDVIVILPVPQAVFWLVV. Over 241-254 the chain is Extracellular; the sequence is PKLIREEKVKLIMT. The chain crosses the membrane as a helical span at residues 255–275; the sequence is ILLLIFLFQFLPKIYHCICLM. Residues 276-282 lie on the Cytoplasmic side of the membrane; that stretch reads RRMQKVT. The helical transmembrane segment at 283-303 threads the bilayer; the sequence is GYIFGTIWWGFALNLIAYFIA. The Extracellular portion of the chain corresponds to 304 to 424; the sequence is SHVAGGCWYV…ANDLEPTSNW (121 aa). The helical transmembrane segment at 425-445 threads the bilayer; sequence LEVIFSIVMVLSGLLLFTLLI. The Cytoplasmic segment spans residues 446 to 726; it reads GNIQVFLHAV…MSIRPHDHLE (281 aa). A nucleoside 3',5'-cyclic phosphate is bound by residues 531 to 661 and Asp600; that span reads LFRG…ARYY. Positions 645 to 661 are calmodulin-binding; that stretch reads FRYKFANERLKRTARYY. The region spanning 666-695 is the IQ domain; sequence RTWAAVNIQMAWRRRRKRTRGENIGGSMSP.

The protein belongs to the cyclic nucleotide-gated cation channel (TC 1.A.1.5) family. Homotetramer or heterotetramer (Potential). Binds calmodulin-1/4 with a higher affinity than calmodulin-2/3/5. As to expression, expressed in the whole plant but only weakly in roots. Strongly expressed in the expanded cotyledons of 14-day-old seedlings and detected later in leaves after the transition to flowering. Also detected in flowers during organ senescence and in the dehiscence zone of siliques.

Its subcellular location is the cell membrane. Its function is as follows. Acts as a cyclic nucleotide-gated ion channel. Permeable to potassium and calcium in a cyclic nucleotide-dependent fashion (cAMP or cGMP). Could also transport lithium, cesium and rubium and displays a strong selectivity against sodium. Seems to directly participate in pathogen-induced calcium influx. May function in homeostasis, re-establishing ionic balance after defense action and/or other stimuli. Could mediate the initiation of the developmentally regulated cell death programs. The chain is Cyclic nucleotide-gated ion channel 2 (CNGC2) from Arabidopsis thaliana (Mouse-ear cress).